The primary structure comprises 361 residues: Probable mannose-1-phosphate guanylyltransferase 2 (361 aa).

2 residues coordinate GDP-alpha-D-mannose: Leu6 and Val7. Diphosphate contacts are provided by Gly9, Gly11, Thr12, Arg13, and Lys23. The GDP-alpha-D-mannose site is built by Gly85, Asn109, Asp111, Gly146, and Asn173.

It belongs to the transferase hexapeptide repeat family.

It catalyses the reaction alpha-D-mannose 1-phosphate + GTP + H(+) = GDP-alpha-D-mannose + diphosphate. It participates in nucleotide-sugar biosynthesis; GDP-alpha-D-mannose biosynthesis; GDP-alpha-D-mannose from alpha-D-mannose 1-phosphate (GTP route): step 1/1. In terms of biological role, catalyzes a reaction of the Smirnoff-Wheeler pathway, the major route to ascorbate biosynthesis in plants. In Oryza sativa subsp. japonica (Rice), this protein is Probable mannose-1-phosphate guanylyltransferase 2.